A 38-amino-acid polypeptide reads, in one-letter code: Putative defensin-like protein 105 (38 aa).

3 cysteine pairs are disulfide-bonded: Cys5–Cys27, Cys13–Cys33, and Cys17–Cys34.

It belongs to the DEFL family.

The sequence is that of Putative defensin-like protein 105 from Arabidopsis thaliana (Mouse-ear cress).